Consider the following 112-residue polypeptide: Secretoglobin family 2B member 24 (112 aa).

The first 23 residues, 1–23 (MKGTLLLLALLMIGELGFHTTEA), serve as a signal peptide directing secretion.

The protein belongs to the secretoglobin family. Expressed in lacrimal gland, at higher level in males than females.

The protein localises to the secreted. This Mus musculus (Mouse) protein is Secretoglobin family 2B member 24 (Scgb2b24).